Here is a 1408-residue protein sequence, read N- to C-terminus: DNA-directed RNA polymerase subunit beta'' (1408 aa).

Belongs to the RNA polymerase beta' chain family. RpoC2 subfamily. In plastids the minimal PEP RNA polymerase catalytic core is composed of four subunits: alpha, beta, beta', and beta''. When a (nuclear-encoded) sigma factor is associated with the core the holoenzyme is formed, which can initiate transcription.

It localises to the plastid. The protein resides in the chloroplast. It carries out the reaction RNA(n) + a ribonucleoside 5'-triphosphate = RNA(n+1) + diphosphate. DNA-dependent RNA polymerase catalyzes the transcription of DNA into RNA using the four ribonucleoside triphosphates as substrates. This chain is DNA-directed RNA polymerase subunit beta'', found in Psilotum nudum (Whisk fern).